The sequence spans 487 residues: GTPase Der (487 aa).

2 EngA-type G domains span residues 2–164 and 203–374; these read KTIA…SLAK and IAVG…QRFA. GTP is bound by residues 8-15, 55-59, 116-119, 209-216, 256-260, and 320-323; these read GKPNVGKS, DTGGI, NKVD, GRVNVGKS, DTAGI, and NKWD. In terms of domain architecture, KH-like spans 375–459; the sequence is YRIPTSALND…PILLSVKGKN (85 aa). Over residues 459–480 the composition is skewed to basic and acidic residues; it reads NAKDEENTSAKKESPSKVSHRE. The interval 459–487 is disordered; sequence NAKDEENTSAKKESPSKVSHRESKNRRFV.

The protein belongs to the TRAFAC class TrmE-Era-EngA-EngB-Septin-like GTPase superfamily. EngA (Der) GTPase family. As to quaternary structure, associates with the 50S ribosomal subunit.

GTPase that plays an essential role in the late steps of ribosome biogenesis. The sequence is that of GTPase Der from Helicobacter hepaticus (strain ATCC 51449 / 3B1).